The primary structure comprises 242 residues: HTH-type transcriptional regulator GadW (242 aa).

The region spanning 139–236 (GKVERLISFD…GVTPHQFSQH (98 aa)) is the HTH araC/xylS-type domain. 2 DNA-binding regions (H-T-H motif) span residues 156–177 (RDIAERMYTSESLIKKKLQDEN) and 203–226 (LHTIAEKCGYSSTSYFINTFRQYY).

In terms of assembly, homodimer.

In terms of biological role, depending on the conditions (growth phase and medium), acts as a positive or negative regulator of gadA and gadBC. Repression occurs directly or via the repression of the expression of gadX. Activation occurs directly by the binding of GadW to the gadA and gadBC promoters. The sequence is that of HTH-type transcriptional regulator GadW (gadW) from Escherichia coli O6:H1 (strain CFT073 / ATCC 700928 / UPEC).